The sequence spans 450 residues: UDP-N-acetylmuramoylalanine--D-glutamate ligase (450 aa).

Residue 119-125 coordinates ATP; the sequence is GSNGKTT.

This sequence belongs to the MurCDEF family.

Its subcellular location is the cytoplasm. It carries out the reaction UDP-N-acetyl-alpha-D-muramoyl-L-alanine + D-glutamate + ATP = UDP-N-acetyl-alpha-D-muramoyl-L-alanyl-D-glutamate + ADP + phosphate + H(+). The protein operates within cell wall biogenesis; peptidoglycan biosynthesis. Its function is as follows. Cell wall formation. Catalyzes the addition of glutamate to the nucleotide precursor UDP-N-acetylmuramoyl-L-alanine (UMA). The sequence is that of UDP-N-acetylmuramoylalanine--D-glutamate ligase from Bacillus cereus (strain G9842).